Consider the following 98-residue polypeptide: NADH-ubiquinone oxidoreductase chain 4L (98 aa).

3 consecutive transmembrane segments (helical) span residues 1 to 21, 31 to 51, and 61 to 81; these read MSLT…GLLM, LCLE…VLTI, and IILL…LVVV.

It belongs to the complex I subunit 4L family. In terms of assembly, core subunit of respiratory chain NADH dehydrogenase (Complex I) which is composed of 45 different subunits.

The protein resides in the mitochondrion inner membrane. It catalyses the reaction a ubiquinone + NADH + 5 H(+)(in) = a ubiquinol + NAD(+) + 4 H(+)(out). In terms of biological role, core subunit of the mitochondrial membrane respiratory chain NADH dehydrogenase (Complex I) which catalyzes electron transfer from NADH through the respiratory chain, using ubiquinone as an electron acceptor. Part of the enzyme membrane arm which is embedded in the lipid bilayer and involved in proton translocation. In Chalinolobus tuberculatus (New Zealand long-tailed bat), this protein is NADH-ubiquinone oxidoreductase chain 4L (MT-ND4L).